The chain runs to 232 residues: 5'-methylthioadenosine/S-adenosylhomocysteine nucleosidase (232 aa).

Glu12 (proton acceptor) is an active-site residue. Residues Gly78, Ile152, and 173–174 (ME) each bind substrate. Asp197 functions as the Proton donor in the catalytic mechanism.

This sequence belongs to the PNP/UDP phosphorylase family. MtnN subfamily. As to quaternary structure, homodimer.

It carries out the reaction S-adenosyl-L-homocysteine + H2O = S-(5-deoxy-D-ribos-5-yl)-L-homocysteine + adenine. The catalysed reaction is S-methyl-5'-thioadenosine + H2O = 5-(methylsulfanyl)-D-ribose + adenine. It catalyses the reaction 5'-deoxyadenosine + H2O = 5-deoxy-D-ribose + adenine. The protein operates within amino-acid biosynthesis; L-methionine biosynthesis via salvage pathway; S-methyl-5-thio-alpha-D-ribose 1-phosphate from S-methyl-5'-thioadenosine (hydrolase route): step 1/2. Its function is as follows. Catalyzes the irreversible cleavage of the glycosidic bond in both 5'-methylthioadenosine (MTA) and S-adenosylhomocysteine (SAH/AdoHcy) to adenine and the corresponding thioribose, 5'-methylthioribose and S-ribosylhomocysteine, respectively. Also cleaves 5'-deoxyadenosine, a toxic by-product of radical S-adenosylmethionine (SAM) enzymes, into 5-deoxyribose and adenine. Thus, is required for in vivo function of the radical SAM enzymes biotin synthase and lipoic acid synthase, that are inhibited by 5'-deoxyadenosine accumulation. The protein is 5'-methylthioadenosine/S-adenosylhomocysteine nucleosidase of Erwinia tasmaniensis (strain DSM 17950 / CFBP 7177 / CIP 109463 / NCPPB 4357 / Et1/99).